The primary structure comprises 711 residues: Long-chain-fatty-acid--CoA ligase 4 (711 aa).

A helical; Signal-anchor for type III membrane protein membrane pass occupies residues 8–28 (LTIVLLPVHLLITIYSALIFI). Residues 29 to 711 (PWYFLTNAKK…KDIERMYGGK (683 aa)) lie on the Cytoplasmic side of the membrane. Ser447 carries the phosphoserine modification.

It belongs to the ATP-dependent AMP-binding enzyme family. Requires Mg(2+) as cofactor.

Its subcellular location is the mitochondrion outer membrane. The protein localises to the peroxisome membrane. The protein resides in the microsome membrane. It is found in the endoplasmic reticulum membrane. It localises to the cell membrane. It carries out the reaction a long-chain fatty acid + ATP + CoA = a long-chain fatty acyl-CoA + AMP + diphosphate. The enzyme catalyses (5Z,8Z,11Z,14Z)-eicosatetraenoate + ATP + CoA = (5Z,8Z,11Z,14Z)-eicosatetraenoyl-CoA + AMP + diphosphate. The catalysed reaction is 15-hydroxy-(5Z,8Z,11Z,13E)-eicosatetraenoate + ATP + CoA = 15-hydroxy-(5Z,8Z,11Z,13E)-eicosatetraenoyl-CoA + AMP + diphosphate. It catalyses the reaction 12-hydroxy-(5Z,8Z,10E,14Z)-eicosatetraenoate + ATP + CoA = 12-hydroxy-(5Z,8Z,10E,14Z)-eicosatetraenoyl-CoA + AMP + diphosphate. It carries out the reaction 5-hydroxy-(6E,8Z,11Z,14Z)-eicosatetraenoate + ATP + CoA = 5-hydroxy-(6E,8Z,11Z,14Z)-eicosatetraenoyl-CoA + AMP + diphosphate. The enzyme catalyses 5,6-epoxy-(8Z,11Z,14Z)-eicosatrienoate + ATP + CoA = 5,6-epoxy-(8Z,11Z,14Z)-eicosatrienoyl-CoA + AMP + diphosphate. The catalysed reaction is 14,15-epoxy-(5Z,8Z,11Z)-eicosatrienoate + ATP + CoA = 14,15-epoxy-(5Z,8Z,11Z)-eicosatrienoyl-CoA + AMP + diphosphate. It catalyses the reaction 11,12-epoxy-(5Z,8Z,14Z)-eicosatrienoate + ATP + CoA = 11,12-epoxy-(5Z,8Z,14Z)-eicosatrienoyl-CoA + AMP + diphosphate. It carries out the reaction 8,9-epoxy-(5Z,11Z,14Z)-eicosatrienoate + ATP + CoA = 8,9-epoxy-(5Z,11Z,14Z)-eicosatrienoyl-CoA + AMP + diphosphate. The enzyme catalyses hexadecanoate + ATP + CoA = hexadecanoyl-CoA + AMP + diphosphate. The catalysed reaction is (E)-hexadec-2-enoate + ATP + CoA = (2E)-hexadecenoyl-CoA + AMP + diphosphate. With respect to regulation, both triacsin C and rosiglitazone inhibit arachidonoyl-CoA ligase activity. Functionally, catalyzes the conversion of long-chain fatty acids to their active form acyl-CoA for both synthesis of cellular lipids, and degradation via beta-oxidation. Preferentially activates arachidonate and eicosapentaenoate as substrates. Preferentially activates 8,9-EET &gt; 14,15-EET &gt; 5,6-EET &gt; 11,12-EET. Modulates glucose-stimulated insulin secretion by regulating the levels of unesterified EETs. Modulates prostaglandin E2 secretion. This Rattus norvegicus (Rat) protein is Long-chain-fatty-acid--CoA ligase 4 (Acsl4).